A 276-amino-acid chain; its full sequence is Probable endonuclease 4 (276 aa).

Positions 67, 107, 142, 176, 179, 211, 224, 226, and 256 each coordinate Zn(2+).

The protein belongs to the AP endonuclease 2 family. Requires Zn(2+) as cofactor.

It catalyses the reaction Endonucleolytic cleavage to 5'-phosphooligonucleotide end-products.. Functionally, endonuclease IV plays a role in DNA repair. It cleaves phosphodiester bonds at apurinic or apyrimidinic (AP) sites, generating a 3'-hydroxyl group and a 5'-terminal sugar phosphate. The protein is Probable endonuclease 4 of Methanosphaera stadtmanae (strain ATCC 43021 / DSM 3091 / JCM 11832 / MCB-3).